The chain runs to 290 residues: Protease HtpX homolog (290 aa).

2 consecutive transmembrane segments (helical) span residues 4–24 (ILLFVLTNVMVVAVLGIVASL) and 39–59 (TALLGFALVMGFGGAIISLLI). His144 lines the Zn(2+) pocket. The active site involves Glu145. Residue His148 participates in Zn(2+) binding. Helical transmembrane passes span 159 to 179 (LIQGVMNTFVVFLSRVIGYAV) and 199 to 219 (VSTIVLDIVLGFAAAIVVAWF). A Zn(2+)-binding site is contributed by Glu224.

The protein belongs to the peptidase M48B family. Requires Zn(2+) as cofactor.

It localises to the cell inner membrane. The polypeptide is Protease HtpX homolog (Variovorax paradoxus (strain S110)).